The following is a 505-amino-acid chain: ATP synthase subunit alpha (505 aa).

170–177 (GDRQTGKT) provides a ligand contact to ATP.

Belongs to the ATPase alpha/beta chains family. F-type ATPases have 2 components, CF(1) - the catalytic core - and CF(0) - the membrane proton channel. CF(1) has five subunits: alpha(3), beta(3), gamma(1), delta(1), epsilon(1). CF(0) has four main subunits: a(1), b(1), b'(1) and c(9-12).

The protein localises to the cellular thylakoid membrane. It catalyses the reaction ATP + H2O + 4 H(+)(in) = ADP + phosphate + 5 H(+)(out). Its function is as follows. Produces ATP from ADP in the presence of a proton gradient across the membrane. The alpha chain is a regulatory subunit. The polypeptide is ATP synthase subunit alpha (Trichodesmium erythraeum (strain IMS101)).